The following is a 599-amino-acid chain: Elongation factor 4 (599 aa).

The region spanning 2–184 is the tr-type G domain; sequence KNIRNFSIIA…RLVRDIPPPQ (183 aa). GTP contacts are provided by residues 14–19 and 131–134; these read DHGKST and NKID.

It belongs to the TRAFAC class translation factor GTPase superfamily. Classic translation factor GTPase family. LepA subfamily.

Its subcellular location is the cell inner membrane. The catalysed reaction is GTP + H2O = GDP + phosphate + H(+). Required for accurate and efficient protein synthesis under certain stress conditions. May act as a fidelity factor of the translation reaction, by catalyzing a one-codon backward translocation of tRNAs on improperly translocated ribosomes. Back-translocation proceeds from a post-translocation (POST) complex to a pre-translocation (PRE) complex, thus giving elongation factor G a second chance to translocate the tRNAs correctly. Binds to ribosomes in a GTP-dependent manner. The polypeptide is Elongation factor 4 (Salmonella agona (strain SL483)).